A 397-amino-acid polypeptide reads, in one-letter code: Acetate kinase (397 aa).

A Mg(2+)-binding site is contributed by asparagine 8. Lysine 15 provides a ligand contact to ATP. Arginine 92 is a binding site for substrate. The Proton donor/acceptor role is filled by aspartate 149. Residues 209–213 (HLGNG), 283–285 (DFR), and 331–335 (GVGEN) each bind ATP. A Mg(2+)-binding site is contributed by glutamate 385.

It belongs to the acetokinase family. Homodimer. Mg(2+) is required as a cofactor. The cofactor is Mn(2+).

It is found in the cytoplasm. The enzyme catalyses acetate + ATP = acetyl phosphate + ADP. It functions in the pathway metabolic intermediate biosynthesis; acetyl-CoA biosynthesis; acetyl-CoA from acetate: step 1/2. Its function is as follows. Catalyzes the formation of acetyl phosphate from acetate and ATP. Can also catalyze the reverse reaction. This is Acetate kinase from Corynebacterium glutamicum (strain R).